Reading from the N-terminus, the 692-residue chain is Potassium-transporting ATPase ATP-binding subunit (692 aa).

The next 4 membrane-spanning stretches (helical) occupy residues 35–55 (VMFIVFLGALFTTWIFFKDLY), 64–84 (LQISLWLWFTVLFANFAEAIA), 213–233 (IALTMLLSGLSFIFLIAVMSL), and 254–274 (ILISLLVCLIPTTIAGLLSAI). Asp-307 serves as the catalytic 4-aspartylphosphate intermediate. Residues Asp-344, Glu-348, 377 to 384 (FSASTKMS), and Lys-400 each bind ATP. Positions 523 and 527 each coordinate Mg(2+). 3 consecutive transmembrane segments (helical) span residues 592-612 (YFAILPALFGSFYAVSEVGPL), 626-646 (AVLSAVIFNALVIPALIPLAL), and 672-692 (MVIPFLGIKCIDLMLGFLGII).

Belongs to the cation transport ATPase (P-type) (TC 3.A.3) family. Type IA subfamily. As to quaternary structure, the system is composed of three essential subunits: KdpA, KdpB and KdpC.

It localises to the cell inner membrane. It catalyses the reaction K(+)(out) + ATP + H2O = K(+)(in) + ADP + phosphate + H(+). Part of the high-affinity ATP-driven potassium transport (or Kdp) system, which catalyzes the hydrolysis of ATP coupled with the electrogenic transport of potassium into the cytoplasm. This subunit is responsible for energy coupling to the transport system and for the release of the potassium ions to the cytoplasm. The protein is Potassium-transporting ATPase ATP-binding subunit of Leptospira interrogans serogroup Icterohaemorrhagiae serovar Lai (strain 56601).